The sequence spans 290 residues: Glutamate racemase (290 aa).

Substrate contacts are provided by residues 24–25 and 56–57; these read DS and YG. The active-site Proton donor/acceptor is Cys87. Substrate is bound at residue 88 to 89; it reads NT. Cys199 (proton donor/acceptor) is an active-site residue. 200–201 contacts substrate; sequence TH. Positions 271-290 are disordered; sequence GADGASLPDPPSPRIELTTT.

This sequence belongs to the aspartate/glutamate racemases family.

It carries out the reaction L-glutamate = D-glutamate. It functions in the pathway cell wall biogenesis; peptidoglycan biosynthesis. In terms of biological role, provides the (R)-glutamate required for cell wall biosynthesis. This Deinococcus radiodurans (strain ATCC 13939 / DSM 20539 / JCM 16871 / CCUG 27074 / LMG 4051 / NBRC 15346 / NCIMB 9279 / VKM B-1422 / R1) protein is Glutamate racemase.